The following is a 232-amino-acid chain: Lipoprotein-releasing system ATP-binding protein LolD 1 (232 aa).

In terms of domain architecture, ABC transporter spans 11 to 231; sequence VYLHDVKRQY…SIQDGLVVEL (221 aa). 47-54 contributes to the ATP binding site; that stretch reads APSGAGKS.

Belongs to the ABC transporter superfamily. Lipoprotein translocase (TC 3.A.1.125) family. The complex is composed of two ATP-binding proteins (LolD) and two transmembrane proteins (LolC and LolE).

Its subcellular location is the cell inner membrane. In terms of biological role, part of the ABC transporter complex LolCDE involved in the translocation of mature outer membrane-directed lipoproteins, from the inner membrane to the periplasmic chaperone, LolA. Responsible for the formation of the LolA-lipoprotein complex in an ATP-dependent manner. This Rhodopseudomonas palustris (strain BisB18) protein is Lipoprotein-releasing system ATP-binding protein LolD 1.